The sequence spans 627 residues: Chaperone protein HtpG (627 aa).

The a; substrate-binding stretch occupies residues 1–343; sequence MATQEFQAET…SEDLSLNISR (343 aa). Residues 344–553 are b; that stretch reads EMLQQDKQLK…EGEISIEMEK (210 aa). The c stretch occupies residues 554 to 627; that stretch reads VLQSMPNNQN…YTNNVCKIMS (74 aa).

The protein belongs to the heat shock protein 90 family. As to quaternary structure, homodimer.

The protein resides in the cytoplasm. Molecular chaperone. Has ATPase activity. The polypeptide is Chaperone protein HtpG (Natranaerobius thermophilus (strain ATCC BAA-1301 / DSM 18059 / JW/NM-WN-LF)).